We begin with the raw amino-acid sequence, 197 residues long: Adrenodoxin-like protein 1, mitochondrial (197 aa).

A mitochondrion-targeting transit peptide spans 1-35 (MIGHRISRLGSTIVKQLAREGYLATYGTKNLHRSY). The 2Fe-2S ferredoxin-type domain occupies 79–184 (EKITIIFVDK…GVRLAIPSAT (106 aa)). Positions 118, 124, 127, and 165 each coordinate [2Fe-2S] cluster.

This sequence belongs to the adrenodoxin/putidaredoxin family. [2Fe-2S] cluster is required as a cofactor.

Its subcellular location is the mitochondrion matrix. In terms of biological role, associates in vitro with the adrenodoxin reductase MFDR to form an efficient low potential electron transfer chain that is able to reduce cytochrome C. Functions as accessory mitochondrial protein involved with BIO2 in the plant biotin synthase reaction. The sequence is that of Adrenodoxin-like protein 1, mitochondrial from Arabidopsis thaliana (Mouse-ear cress).